A 269-amino-acid polypeptide reads, in one-letter code: Imidazoleglycerol-phosphate dehydratase 3, chloroplastic (269 aa).

Residues 1–51 (MTTAPVVSPSLSRLHSAPASPFPKAPVGSGAGVAFPARPYGPSLRLRSAVM) constitute a chloroplast transit peptide. Substrate contacts are provided by residues Glu-83, 109–117 (HMLDQLASH), 135–139 (HHSNE), Arg-161, and Arg-183. Mn(2+) contacts are provided by His-109, His-135, His-136, and Glu-139. Residues His-207, His-231, His-232, and Glu-235 each coordinate Mn(2+). Substrate contacts are provided by residues 231 to 239 (HHIIEATFK) and 261 to 263 (SSK).

Belongs to the imidazoleglycerol-phosphate dehydratase family. Requires Mn(2+) as cofactor.

Its subcellular location is the plastid. It localises to the chloroplast. It catalyses the reaction D-erythro-1-(imidazol-4-yl)glycerol 3-phosphate = 3-(imidazol-4-yl)-2-oxopropyl phosphate + H2O. It functions in the pathway amino-acid biosynthesis; L-histidine biosynthesis; L-histidine from 5-phospho-alpha-D-ribose 1-diphosphate: step 6/9. This Triticum aestivum (Wheat) protein is Imidazoleglycerol-phosphate dehydratase 3, chloroplastic.